Reading from the N-terminus, the 399-residue chain is Chorismate synthase (399 aa).

NADP(+)-binding residues include R40 and R46. FMN is bound by residues 129 to 131 (RSS), 257 to 258 (QA), G302, 317 to 321 (KPISS), and R343.

The protein belongs to the chorismate synthase family. As to quaternary structure, homotetramer. FMNH2 serves as cofactor.

The enzyme catalyses 5-O-(1-carboxyvinyl)-3-phosphoshikimate = chorismate + phosphate. Its pathway is metabolic intermediate biosynthesis; chorismate biosynthesis; chorismate from D-erythrose 4-phosphate and phosphoenolpyruvate: step 7/7. Its function is as follows. Catalyzes the anti-1,4-elimination of the C-3 phosphate and the C-6 proR hydrogen from 5-enolpyruvylshikimate-3-phosphate (EPSP) to yield chorismate, which is the branch point compound that serves as the starting substrate for the three terminal pathways of aromatic amino acid biosynthesis. This reaction introduces a second double bond into the aromatic ring system. This Chlorobium chlorochromatii (strain CaD3) protein is Chorismate synthase.